We begin with the raw amino-acid sequence, 445 residues long: Tubby-like F-box protein 14 (445 aa).

The F-box domain occupies 56-114 (SSCWANLPPELLRDVIERLEASEAAWPSRKNVVACAAVCRTWRDMCREIVKNPEFCGKI).

Belongs to the TUB family. As to expression, ubiquitous.

This chain is Tubby-like F-box protein 14 (TULP14), found in Oryza sativa subsp. japonica (Rice).